Here is a 648-residue protein sequence, read N- to C-terminus: Probable potassium transport system protein Kup 1 (648 aa).

Transmembrane regions (helical) follow at residues 25–45, 57–77, 113–133, 153–173, 184–204, 219–239, 263–283, 312–332, 362–382, 391–411, 417–437, and 446–466; these read LTLG…IYAF, IVAG…ILVV, LVMA…VITP, SVSR…LFLM, LFGP…LIHI, GVLF…AVFL, WLAI…AFAL, IPLV…VITG, IYLP…VLGF, AYGV…FLVV, WGWP…LFFF, and EGGW…VTWV.

The protein belongs to the HAK/KUP transporter (TC 2.A.72) family.

Its subcellular location is the cell inner membrane. The enzyme catalyses K(+)(in) + H(+)(in) = K(+)(out) + H(+)(out). Functionally, transport of potassium into the cell. Likely operates as a K(+):H(+) symporter. The chain is Probable potassium transport system protein Kup 1 from Rhizorhabdus wittichii (strain DSM 6014 / CCUG 31198 / JCM 15750 / NBRC 105917 / EY 4224 / RW1) (Sphingomonas wittichii).